We begin with the raw amino-acid sequence, 180 residues long: Anaerobic nitrite reductase GLB0 (180 aa).

A Globin domain is found at 23–172; sequence TYSKENEQLV…LAEQVKAEMH (150 aa). Residues 56 to 60 carry the Homodimerization motif; that stretch reads EIAPG. Residues Ser-66, Lys-80, His-84, Lys-114, Thr-118, and His-119 each coordinate heme b. Positions 126 to 138 match the Homodimerization motif; sequence DDQFEIVKEAILY.

Belongs to the plant globin family. Homodimer. Heme b serves as cofactor.

Its subcellular location is the cytoplasm. The protein resides in the nucleus. The catalysed reaction is Fe(III)-heme b-[protein] + nitric oxide + H2O = Fe(II)-heme b-[protein] + nitrite + 2 H(+). Its function is as follows. Phytoglobin that reduces nitrite to nitric oxide (NO) under anoxic conditions (e.g. during flooding or in waterlogged soil). May not function as an oxygen storage or transport protein. Has an unusually high affinity for O(2) through an hexacoordinate heme iron because of a very low dissociation constant. This chain is Anaerobic nitrite reductase GLB0, found in Physcomitrium patens (Spreading-leaved earth moss).